The sequence spans 217 residues: MOB kinase activator 3A (217 aa).

Zn(2+)-binding residues include Cys83, Cys88, His165, and His170.

It belongs to the MOB1/phocein family.

In terms of biological role, may regulate the activity of kinases. This chain is MOB kinase activator 3A (MOB3A), found in Pongo abelii (Sumatran orangutan).